The sequence spans 757 residues: Catalase-peroxidase (757 aa).

Positions Trp-101–Tyr-248 form a cross-link, tryptophyl-tyrosyl-methioninium (Trp-Tyr) (with M-274). His-102 serves as the catalytic Proton acceptor. Residues Val-213–Ser-232 are disordered. Positions Tyr-248–Met-274 form a cross-link, tryptophyl-tyrosyl-methioninium (Tyr-Met) (with W-101). Position 289 (His-289) interacts with heme b.

It belongs to the peroxidase family. Peroxidase/catalase subfamily. Homodimer or homotetramer. Heme b is required as a cofactor. In terms of processing, formation of the three residue Trp-Tyr-Met cross-link is important for the catalase, but not the peroxidase activity of the enzyme.

It catalyses the reaction H2O2 + AH2 = A + 2 H2O. The enzyme catalyses 2 H2O2 = O2 + 2 H2O. Its function is as follows. Bifunctional enzyme with both catalase and broad-spectrum peroxidase activity. The polypeptide is Catalase-peroxidase (Xylella fastidiosa (strain M23)).